A 56-amino-acid polypeptide reads, in one-letter code: Ovomucoid (56 aa).

Residues 6 to 56 (VDCSEYPKPACTLEHRPLCGSDNKTYGNKCNFCNAVVESNGTLTLSHFGKC) enclose the Kazal-like domain. Intrachain disulfides connect Cys8–Cys38, Cys16–Cys35, and Cys24–Cys56. N-linked (GlcNAc...) asparagine glycosylation occurs at Asn45.

Its subcellular location is the secreted. This chain is Ovomucoid, found in Pavo cristatus (Indian peafowl).